A 172-amino-acid chain; its full sequence is Transmembrane protein 91 (172 aa).

Disordered stretches follow at residues 1-31 (MDSP…RHEL) and 55-83 (PSVS…DWDG). Topologically, residues 1 to 97 (MDSPSLRELQ…SPFLPHDHLG (97 aa)) are extracellular. Residues 69–81 (VEDMSSSDSDSDW) show a composition bias toward acidic residues. The chain crosses the membrane as a helical span at residues 98–118 (LAVFSMLCCFWPVGIAAFCLA). At 119–139 (QKTNKAWAKGDIQGAGAASRR) the chain is on the cytoplasmic side. A helical membrane pass occupies residues 140-160 (AFLLGVLAVGLGVCTYAAALV). Over 161–172 (TLAAYLASRDPP) the chain is Extracellular.

It belongs to the CD225/Dispanin family.

The protein resides in the membrane. This is Transmembrane protein 91 (TMEM91) from Homo sapiens (Human).